A 719-amino-acid chain; its full sequence is Glutamate--tRNA ligase, cytoplasmic (719 aa).

S93 contributes to the ATP binding site. The disordered stretch occupies residues S176–D205. Positions D195–V204 are enriched in basic and acidic residues. R217–A219 provides a ligand contact to L-glutamate. Residues P220–H230 carry the 'HIGH' region motif. Position 227 (H227) interacts with ATP. L-glutamate-binding positions include Y393–C397 and R411. Residues E414 and L448–R452 each bind ATP. The 'KMSKS' region motif lies at L448–R452.

It belongs to the class-I aminoacyl-tRNA synthetase family. Glutamate--tRNA ligase type 2 subfamily. In terms of assembly, interacts with GLN2, COL4 and RPP13L4/ZAR1.

Its subcellular location is the cytoplasm. It localises to the cytosol. It catalyses the reaction tRNA(Glu) + L-glutamate + ATP = L-glutamyl-tRNA(Glu) + AMP + diphosphate. Functionally, catalyzes the attachment of glutamate to tRNA(Glu) in a two-step reaction: glutamate is first activated by ATP to form Glu-AMP and then transferred to the acceptor end of tRNA(Glu). The chain is Glutamate--tRNA ligase, cytoplasmic from Arabidopsis thaliana (Mouse-ear cress).